A 161-amino-acid polypeptide reads, in one-letter code: Cytochrome b6-f complex subunit 4 (161 aa).

3 helical membrane passes run 37–57 (LLYI…GLAV), 96–116 (LLGV…PFIE), and 132–152 (SVFL…TLPI).

This sequence belongs to the cytochrome b family. PetD subfamily. As to quaternary structure, the 4 large subunits of the cytochrome b6-f complex are cytochrome b6, subunit IV (17 kDa polypeptide, PetD), cytochrome f and the Rieske protein, while the 4 small subunits are PetG, PetL, PetM and PetN. The complex functions as a dimer.

It localises to the cellular thylakoid membrane. Component of the cytochrome b6-f complex, which mediates electron transfer between photosystem II (PSII) and photosystem I (PSI), cyclic electron flow around PSI, and state transitions. In Acaryochloris marina (strain MBIC 11017), this protein is Cytochrome b6-f complex subunit 4.